We begin with the raw amino-acid sequence, 384 residues long: S-adenosylmethionine synthase (384 aa).

Residue H15 coordinates ATP. D17 contacts Mg(2+). E43 contributes to the K(+) binding site. L-methionine-binding residues include E56 and Q99. The segment at 99–109 (QSPDINQGVDR) is flexible loop. ATP-binding positions include 164-166 (DAK), 230-231 (RF), D239, 245-246 (RK), A262, and K266. D239 is a binding site for L-methionine. K270 serves as a coordination point for L-methionine.

It belongs to the AdoMet synthase family. As to quaternary structure, homotetramer; dimer of dimers. The cofactor is Mg(2+). K(+) serves as cofactor.

The protein localises to the cytoplasm. The catalysed reaction is L-methionine + ATP + H2O = S-adenosyl-L-methionine + phosphate + diphosphate. It functions in the pathway amino-acid biosynthesis; S-adenosyl-L-methionine biosynthesis; S-adenosyl-L-methionine from L-methionine: step 1/1. Catalyzes the formation of S-adenosylmethionine (AdoMet) from methionine and ATP. The overall synthetic reaction is composed of two sequential steps, AdoMet formation and the subsequent tripolyphosphate hydrolysis which occurs prior to release of AdoMet from the enzyme. In Salmonella heidelberg (strain SL476), this protein is S-adenosylmethionine synthase.